The sequence spans 257 residues: Snake venom serine proteinase 11 (257 aa).

The signal sequence occupies residues 1–18; the sequence is MVLIRVLANLLILQLSYA. Positions 19–24 are excised as a propeptide; sequence QKSSEL. The region spanning 25–248 is the Peptidase S1 domain; sequence VVGGDECNIN…YTEWIQSIIT (224 aa). 6 disulfide bridges follow: Cys-31/Cys-162, Cys-49/Cys-65, Cys-97/Cys-255, Cys-141/Cys-209, Cys-173/Cys-188, and Cys-199/Cys-224. Residues His-64 and Asp-109 each act as charge relay system in the active site. Asn-120 carries N-linked (GlcNAc...) asparagine glycosylation. The Charge relay system role is filled by Ser-203.

This sequence belongs to the peptidase S1 family. Snake venom subfamily. In terms of assembly, monomer. As to expression, expressed by the venom gland.

It localises to the secreted. Snake venom serine protease that may act in the hemostasis system of the prey. The protein is Snake venom serine proteinase 11 of Crotalus adamanteus (Eastern diamondback rattlesnake).